A 448-amino-acid polypeptide reads, in one-letter code: NADP-specific glutamate dehydrogenase (448 aa).

Residues K88, Q109, and K112 each coordinate substrate. K124 acts as the Proton donor in catalysis. A substrate-binding site is contributed by G163. Positions 207 and 238 each coordinate NADP(+). S381 is a binding site for substrate.

It belongs to the Glu/Leu/Phe/Val dehydrogenases family. As to quaternary structure, homohexamer.

It catalyses the reaction L-glutamate + NADP(+) + H2O = 2-oxoglutarate + NH4(+) + NADPH + H(+). Functionally, catalyzes the reversible oxidative deamination of glutamate to alpha-ketoglutarate and ammonia. The chain is NADP-specific glutamate dehydrogenase (gdhA) from Helicobacter pylori (strain J99 / ATCC 700824) (Campylobacter pylori J99).